The following is a 328-amino-acid chain: Tetraacyldisaccharide 4'-kinase (328 aa).

55 to 62 contacts ATP; that stretch reads TAGGNGKT.

This sequence belongs to the LpxK family.

It carries out the reaction a lipid A disaccharide + ATP = a lipid IVA + ADP + H(+). It functions in the pathway glycolipid biosynthesis; lipid IV(A) biosynthesis; lipid IV(A) from (3R)-3-hydroxytetradecanoyl-[acyl-carrier-protein] and UDP-N-acetyl-alpha-D-glucosamine: step 6/6. Its function is as follows. Transfers the gamma-phosphate of ATP to the 4'-position of a tetraacyldisaccharide 1-phosphate intermediate (termed DS-1-P) to form tetraacyldisaccharide 1,4'-bis-phosphate (lipid IVA). The protein is Tetraacyldisaccharide 4'-kinase of Shigella flexneri serotype 5b (strain 8401).